A 342-amino-acid chain; its full sequence is Trace amine-associated receptor 3 (342 aa).

At 1–35 the chain is on the extracellular side; sequence MDLIYIPEDLSSCPKFGNKSCPPTNRSFRVRLIMY. 2 N-linked (GlcNAc...) asparagine glycosylation sites follow: Asn18 and Asn25. Cystine bridges form between Cys21–Cys185 and Cys104–Cys189. The helical transmembrane segment at 36 to 56 threads the bilayer; the sequence is LLMTGAMVITIFGNLVIIISI. Residues 57 to 68 are Cytoplasmic-facing; sequence SHFKQLHSPTNF. Residues 69 to 89 form a helical membrane-spanning segment; sequence LILSMATTDFLLGFVIMPYSM. At 90-150 the chain is on the extracellular side; that stretch reads VRSVESCWYF…TTMTASMIKR (61 aa). A helical transmembrane segment spans residues 151 to 168; sequence LLFFCWAAPALFSFGLVL. Topologically, residues 169-172 are cytoplasmic; the sequence is SEAN. Positions 173 to 186 are extracellular Loop 2 (ECL2); sequence VSGMQSYEILIACF. The helical transmembrane segment at 173–193 threads the bilayer; the sequence is VSGMQSYEILIACFNFCALTF. At 194 to 198 the chain is on the extracellular side; the sequence is NKFWG. The chain crosses the membrane as a helical span at residues 199 to 223; it reads TILFTTCFFTPGSIMVGIYGKIFIV. Residues 224 to 256 are Cytoplasmic-facing; it reads SRRHARALGNMPENTKGAGRNLSKKKDRKAAKT. Residues 257–277 traverse the membrane as a helical segment; sequence LGIVMGVFLACWLPCFLAVLI. The Extracellular segment spans residues 278-286; sequence DPYLDYSTP. Residues 287–307 form a helical membrane-spanning segment; the sequence is IIVLDLLVWLGYFNSTCNPLI. Residues 308–342 are Cytoplasmic-facing; it reads HGFFYPWFRKALEHIVSGKIFRSNSDTANLFPEAH.

The protein belongs to the G-protein coupled receptor 1 family.

It is found in the cell membrane. In terms of biological role, olfactory receptor activated by several primary trace amines, including isoamylamine. Activated by isoamylamine and cyclohexylamine, but not to the corresponding alcohols, isoamylalcohol and cyclohexanol. This receptor is probably mediated by the G(s)-class of G-proteins which activate adenylate cyclase. The sequence is that of Trace amine-associated receptor 3 (Taar3) from Rattus norvegicus (Rat).